Here is a 79-residue protein sequence, read N- to C-terminus: Large ribosomal subunit protein uL22 (79 aa).

The protein belongs to the universal ribosomal protein uL22 family. In terms of assembly, part of the 50S ribosomal subunit.

Its function is as follows. This protein binds specifically to 23S rRNA; its binding is stimulated by other ribosomal proteins, e.g. L4, L17, and L20. It is important during the early stages of 50S assembly. It makes multiple contacts with different domains of the 23S rRNA in the assembled 50S subunit and ribosome. Functionally, the globular domain of the protein is located near the polypeptide exit tunnel on the outside of the subunit, while an extended beta-hairpin is found that lines the wall of the exit tunnel in the center of the 70S ribosome. The protein is Large ribosomal subunit protein uL22 (rplV) of Clover proliferation phytoplasma.